Reading from the N-terminus, the 166-residue chain is Kelch repeat protein B10 (166 aa).

2 Kelch repeats span residues 25-76 (TIFV…STFG) and 77-129 (MLYF…KLNN).

It belongs to the poxviruses Kelch family.

The chain is Kelch repeat protein B10 from Oryctolagus cuniculus (Rabbit).